Here is a 459-residue protein sequence, read N- to C-terminus: Chaperone SurA (459 aa).

Positions Met-1 to Ala-23 are cleaved as a signal peptide. PpiC domains lie at Val-197–Glu-301 and Val-312–Glu-411.

The protein resides in the periplasm. It catalyses the reaction [protein]-peptidylproline (omega=180) = [protein]-peptidylproline (omega=0). Functionally, chaperone involved in the correct folding and assembly of outer membrane proteins. Recognizes specific patterns of aromatic residues and the orientation of their side chains, which are found more frequently in integral outer membrane proteins. May act in both early periplasmic and late outer membrane-associated steps of protein maturation. In Albidiferax ferrireducens (strain ATCC BAA-621 / DSM 15236 / T118) (Rhodoferax ferrireducens), this protein is Chaperone SurA.